Here is a 174-residue protein sequence, read N- to C-terminus: Peptide methionine sulfoxide reductase MsrA (174 aa).

Cysteine 11 is an active-site residue.

It belongs to the MsrA Met sulfoxide reductase family.

It catalyses the reaction L-methionyl-[protein] + [thioredoxin]-disulfide + H2O = L-methionyl-(S)-S-oxide-[protein] + [thioredoxin]-dithiol. The catalysed reaction is [thioredoxin]-disulfide + L-methionine + H2O = L-methionine (S)-S-oxide + [thioredoxin]-dithiol. Functionally, has an important function as a repair enzyme for proteins that have been inactivated by oxidation. Catalyzes the reversible oxidation-reduction of methionine sulfoxide in proteins to methionine. The chain is Peptide methionine sulfoxide reductase MsrA from Haloquadratum walsbyi (strain DSM 16790 / HBSQ001).